The chain runs to 153 residues: Superoxide dismutase [Cu-Zn] (153 aa).

Cu cation-binding residues include His46, His48, and His63. Cys57 and Cys146 are joined by a disulfide. Zn(2+) is bound by residues His63, His71, His80, and Asp83. Residue His120 coordinates Cu cation.

It belongs to the Cu-Zn superoxide dismutase family. In terms of assembly, homodimer. Cu cation is required as a cofactor. It depends on Zn(2+) as a cofactor.

The protein resides in the cytoplasm. The enzyme catalyses 2 superoxide + 2 H(+) = H2O2 + O2. Functionally, destroys radicals which are normally produced within the cells and which are toxic to biological systems. This is Superoxide dismutase [Cu-Zn] (SODCC) from Solidago canadensis var. scabra (Tall goldenrod).